Here is a 533-residue protein sequence, read N- to C-terminus: D-3-phosphoglycerate dehydrogenase (533 aa).

Residue alanine 2 is modified to N-acetylalanine. A Phosphoserine modification is found at serine 14. At lysine 21 the chain carries N6-acetyllysine; alternate. Residue lysine 21 forms a Glycyl lysine isopeptide (Lys-Gly) (interchain with G-Cter in SUMO1); alternate linkage. Lysine 21 participates in a covalent cross-link: Glycyl lysine isopeptide (Lys-Gly) (interchain with G-Cter in SUMO2); alternate. At lysine 58 the chain carries N6-acetyllysine. Residues threonine 78, 155–156, aspartate 175, threonine 207, 234–236, and aspartate 260 each bind NAD(+); these read RI and CAR. A Phosphothreonine modification is found at threonine 78. Residue arginine 236 is part of the active site. The active site involves glutamate 265. Histidine 283 acts as the Proton donor in catalysis. 283–286 contacts NAD(+); the sequence is HLGA.

The protein belongs to the D-isomer specific 2-hydroxyacid dehydrogenase family. Homotetramer.

It catalyses the reaction (2R)-3-phosphoglycerate + NAD(+) = 3-phosphooxypyruvate + NADH + H(+). It carries out the reaction (R)-2-hydroxyglutarate + NAD(+) = 2-oxoglutarate + NADH + H(+). The enzyme catalyses (S)-malate + NAD(+) = oxaloacetate + NADH + H(+). Its pathway is amino-acid biosynthesis; L-serine biosynthesis; L-serine from 3-phospho-D-glycerate: step 1/3. In terms of biological role, catalyzes the reversible oxidation of 3-phospho-D-glycerate to 3-phosphonooxypyruvate, the first step of the phosphorylated L-serine biosynthesis pathway. Also catalyzes the reversible oxidation of 2-hydroxyglutarate to 2-oxoglutarate and the reversible oxidation of (S)-malate to oxaloacetate. The chain is D-3-phosphoglycerate dehydrogenase (PHGDH) from Pan troglodytes (Chimpanzee).